The chain runs to 72 residues: MAHPSQLGFQDAASPVMEELLHFHDHALMIVFLISTLVLYIIVAMVSTKLTNKYXLDSQEIEVIWTXLPAVI.

Residues 1–14 lie on the Mitochondrial intermembrane side of the membrane; that stretch reads MAHPSQLGFQDAAS. A helical transmembrane segment spans residues 15 to 45; the sequence is PVMEELLHFHDHALMIVFLISTLVLYIIVAM. The Mitochondrial matrix segment spans residues 46–72; that stretch reads VSTKLTNKYXLDSQEIEVIWTXLPAVI.

The protein belongs to the cytochrome c oxidase subunit 2 family. Component of the cytochrome c oxidase (complex IV, CIV), a multisubunit enzyme composed of 14 subunits. The complex is composed of a catalytic core of 3 subunits MT-CO1, MT-CO2 and MT-CO3, encoded in the mitochondrial DNA, and 11 supernumerary subunits COX4I, COX5A, COX5B, COX6A, COX6B, COX6C, COX7A, COX7B, COX7C, COX8 and NDUFA4, which are encoded in the nuclear genome. The complex exists as a monomer or a dimer and forms supercomplexes (SCs) in the inner mitochondrial membrane with NADH-ubiquinone oxidoreductase (complex I, CI) and ubiquinol-cytochrome c oxidoreductase (cytochrome b-c1 complex, complex III, CIII), resulting in different assemblies (supercomplex SCI(1)III(2)IV(1) and megacomplex MCI(2)III(2)IV(2)). Found in a complex with TMEM177, COA6, COX18, COX20, SCO1 and SCO2. Interacts with TMEM177 in a COX20-dependent manner. Interacts with COX20. Interacts with COX16. It depends on Cu cation as a cofactor.

It localises to the mitochondrion inner membrane. The enzyme catalyses 4 Fe(II)-[cytochrome c] + O2 + 8 H(+)(in) = 4 Fe(III)-[cytochrome c] + 2 H2O + 4 H(+)(out). In terms of biological role, component of the cytochrome c oxidase, the last enzyme in the mitochondrial electron transport chain which drives oxidative phosphorylation. The respiratory chain contains 3 multisubunit complexes succinate dehydrogenase (complex II, CII), ubiquinol-cytochrome c oxidoreductase (cytochrome b-c1 complex, complex III, CIII) and cytochrome c oxidase (complex IV, CIV), that cooperate to transfer electrons derived from NADH and succinate to molecular oxygen, creating an electrochemical gradient over the inner membrane that drives transmembrane transport and the ATP synthase. Cytochrome c oxidase is the component of the respiratory chain that catalyzes the reduction of oxygen to water. Electrons originating from reduced cytochrome c in the intermembrane space (IMS) are transferred via the dinuclear copper A center (CU(A)) of subunit 2 and heme A of subunit 1 to the active site in subunit 1, a binuclear center (BNC) formed by heme A3 and copper B (CU(B)). The BNC reduces molecular oxygen to 2 water molecules using 4 electrons from cytochrome c in the IMS and 4 protons from the mitochondrial matrix. The polypeptide is Cytochrome c oxidase subunit 2 (mt-co2) (Gomphosus varius (Bird wrasse)).